The chain runs to 518 residues: Protein nucleotidyltransferase YdiU (518 aa).

A compositionally biased stretch (basic and acidic residues) spans 1–10; it reads MTHLHFDNRL. Residues 1–25 form a disordered region; sequence MTHLHFDNRLRQQLPGDPEEGARRR. Glycine 100, glycine 102, arginine 103, lysine 123, aspartate 135, glycine 136, arginine 193, and arginine 200 together coordinate ATP. The active-site Proton acceptor is aspartate 270. Residues asparagine 271 and aspartate 280 each contribute to the Mg(2+) site. An ATP-binding site is contributed by aspartate 280.

Belongs to the SELO family. Requires Mg(2+) as cofactor. The cofactor is Mn(2+).

It catalyses the reaction L-seryl-[protein] + ATP = 3-O-(5'-adenylyl)-L-seryl-[protein] + diphosphate. The enzyme catalyses L-threonyl-[protein] + ATP = 3-O-(5'-adenylyl)-L-threonyl-[protein] + diphosphate. It carries out the reaction L-tyrosyl-[protein] + ATP = O-(5'-adenylyl)-L-tyrosyl-[protein] + diphosphate. The catalysed reaction is L-histidyl-[protein] + UTP = N(tele)-(5'-uridylyl)-L-histidyl-[protein] + diphosphate. It catalyses the reaction L-seryl-[protein] + UTP = O-(5'-uridylyl)-L-seryl-[protein] + diphosphate. The enzyme catalyses L-tyrosyl-[protein] + UTP = O-(5'-uridylyl)-L-tyrosyl-[protein] + diphosphate. In terms of biological role, nucleotidyltransferase involved in the post-translational modification of proteins. It can catalyze the addition of adenosine monophosphate (AMP) or uridine monophosphate (UMP) to a protein, resulting in modifications known as AMPylation and UMPylation. The sequence is that of Protein nucleotidyltransferase YdiU from Xanthomonas euvesicatoria pv. vesicatoria (strain 85-10) (Xanthomonas campestris pv. vesicatoria).